Reading from the N-terminus, the 222-residue chain is Ribosomal RNA small subunit methyltransferase G (222 aa).

S-adenosyl-L-methionine contacts are provided by residues Gly-73, Leu-78, 124 to 125, and Arg-137; that span reads AE.

This sequence belongs to the methyltransferase superfamily. RNA methyltransferase RsmG family.

Its subcellular location is the cytoplasm. Specifically methylates the N7 position of guanine in position 518 of 16S rRNA. This chain is Ribosomal RNA small subunit methyltransferase G, found in Acidothermus cellulolyticus (strain ATCC 43068 / DSM 8971 / 11B).